Reading from the N-terminus, the 159-residue chain is Transcriptional repressor NrdR (159 aa).

Residues 3–34 (CPFCRHDDTQVVDSRVSEDGAAIRRRRRCSAC) fold into a zinc finger. The ATP-cone domain occupies 49–139 (PAVVKKDGSR…VYRRFEDVSE (91 aa)).

This sequence belongs to the NrdR family. Zn(2+) is required as a cofactor.

In terms of biological role, negatively regulates transcription of bacterial ribonucleotide reductase nrd genes and operons by binding to NrdR-boxes. This Burkholderia cenocepacia (strain HI2424) protein is Transcriptional repressor NrdR.